The primary structure comprises 501 residues: ATP synthase subunit alpha (501 aa).

Gly-169 to Thr-176 contributes to the ATP binding site.

Belongs to the ATPase alpha/beta chains family. F-type ATPases have 2 components, CF(1) - the catalytic core - and CF(0) - the membrane proton channel. CF(1) has five subunits: alpha(3), beta(3), gamma(1), delta(1), epsilon(1). CF(0) has three main subunits: a(1), b(2) and c(9-12). The alpha and beta chains form an alternating ring which encloses part of the gamma chain. CF(1) is attached to CF(0) by a central stalk formed by the gamma and epsilon chains, while a peripheral stalk is formed by the delta and b chains.

It localises to the cell membrane. It catalyses the reaction ATP + H2O + 4 H(+)(in) = ADP + phosphate + 5 H(+)(out). In terms of biological role, produces ATP from ADP in the presence of a proton gradient across the membrane. The alpha chain is a regulatory subunit. The polypeptide is ATP synthase subunit alpha (Streptococcus equi subsp. equi (strain 4047)).